The chain runs to 414 residues: O-methyltransferase sirM (414 aa).

Asp-270 is an S-adenosyl-L-methionine binding site. The active-site Proton acceptor is the His-321.

The protein belongs to the class I-like SAM-binding methyltransferase superfamily. Cation-independent O-methyltransferase family. COMT subfamily.

The protein operates within mycotoxin biosynthesis. Its function is as follows. O-methyltransferase; part of the gene cluster that mediates the biosynthesis of sirodesmin PL, an epipolythiodioxopiperazine (ETP) characterized by a disulfide bridged cyclic dipeptide and that acts as a phytotoxin which is involved in the blackleg didease of canola. SirD catalyzes the O-prenylation of L-tyrosine (L-Tyr) in the presence of dimethylallyl diphosphate (DMAPP) to yield 4-O-dimethylallyl-L-Tyr, and therefore represents probably the first pathway-specific enzyme in the biosynthesis of sirodesmin PL. 4-O-dimethylallyl-L-Tyr, then undergoes condensation with L-Ser in a reaction catalyzed by the non-ribosomal peptide synthase sirP to form the diketopiperazine (DKP) backbone. Further bishydroxylation of the DKP performed by the cytochrome P450 monooxygenase sirC leads to the production of the intermediate phomamide. This step is essential to form the reactive thiol group required for toxicity of sirodesmin PL. The next steps of sirodesmin biosynthesis are not well understood yet, but some predictions could be made from intermediate compounds identification. Phomamide is converted into phomalizarine via oxidation, probably by sirT. Further oxidation, methylation (by sirM or sirN) and reduction steps convert phomalizarine to deacetyl sirodesmin. Finally, acetyltransferase sirH probably acetylates deacetyl sirodesmin to produce sirodesmin PL. This Leptosphaeria maculans (Blackleg fungus) protein is O-methyltransferase sirM.